A 271-amino-acid chain; its full sequence is Tryptophan synthase alpha chain (271 aa).

Active-site proton acceptor residues include glutamate 53 and aspartate 64.

The protein belongs to the TrpA family. In terms of assembly, tetramer of two alpha and two beta chains.

It carries out the reaction (1S,2R)-1-C-(indol-3-yl)glycerol 3-phosphate + L-serine = D-glyceraldehyde 3-phosphate + L-tryptophan + H2O. It participates in amino-acid biosynthesis; L-tryptophan biosynthesis; L-tryptophan from chorismate: step 5/5. Its function is as follows. The alpha subunit is responsible for the aldol cleavage of indoleglycerol phosphate to indole and glyceraldehyde 3-phosphate. This chain is Tryptophan synthase alpha chain, found in Streptomyces coelicolor (strain ATCC BAA-471 / A3(2) / M145).